The chain runs to 233 residues: UPF0502 protein YPTS_2082 (233 aa).

The protein belongs to the UPF0502 family.

The polypeptide is UPF0502 protein YPTS_2082 (Yersinia pseudotuberculosis serotype IB (strain PB1/+)).